The chain runs to 232 residues: uncharacterized protein (232 aa).

A disordered region spans residues methionine 1–aspartate 46. Over residues serine 28 to aspartate 46 the composition is skewed to basic and acidic residues.

This is an uncharacterized protein from Rhizobium meliloti (Ensifer meliloti).